The following is a 413-amino-acid chain: CinA-like protein (413 aa).

This sequence belongs to the CinA family.

The chain is CinA-like protein from Geotalea daltonii (strain DSM 22248 / JCM 15807 / FRC-32) (Geobacter daltonii).